The primary structure comprises 491 residues: Cobyric acid synthase (491 aa).

Positions 250 to 437 (RLRVVVPVLP…LHGIFDHPAA (188 aa)) constitute a GATase cobBQ-type domain. The Nucleophile role is filled by cysteine 331. Histidine 429 is an active-site residue.

The protein belongs to the CobB/CobQ family. CobQ subfamily.

Its pathway is cofactor biosynthesis; adenosylcobalamin biosynthesis. In terms of biological role, catalyzes amidations at positions B, D, E, and G on adenosylcobyrinic A,C-diamide. NH(2) groups are provided by glutamine, and one molecule of ATP is hydrogenolyzed for each amidation. The sequence is that of Cobyric acid synthase from Xanthomonas campestris pv. campestris (strain B100).